Here is a 396-residue protein sequence, read N- to C-terminus: Ribosomal RNA large subunit methyltransferase I (396 aa).

The PUA domain maps to 2–79 (AVRIKLKPGR…REEEIDREFF (78 aa)).

The protein belongs to the methyltransferase superfamily. RlmI family.

It is found in the cytoplasm. It carries out the reaction cytidine(1962) in 23S rRNA + S-adenosyl-L-methionine = 5-methylcytidine(1962) in 23S rRNA + S-adenosyl-L-homocysteine + H(+). Its function is as follows. Specifically methylates the cytosine at position 1962 (m5C1962) of 23S rRNA. In Shewanella sp. (strain MR-7), this protein is Ribosomal RNA large subunit methyltransferase I.